The following is a 343-amino-acid chain: MVELEIVWLVRGAWITVWIVSILPLVIASIPTSKLNSFRELVLSFAGRGKILHPSSQKFTIPQKCFAHFYVIGVVWTTLLLAATWMYACKMAPLSSEEFQLSDIASRLAGGSDVFSVHKSNMTPVEHRFKVWRAVFLLLLMEIHVLRRLIESFYVFKYSPSARMHILGYFAGLFFYVTAPLSLCSNIAPEVAGFVGNQVAEFIANGKSHTSAPEFNLLSSISPLMKLGSLQWIGGAIFLWGWIHQRRCHAILGSLRENPSQAKEYIIPYGDWFGMVSSPHFLAEIVLYAGLLIASGGTDITIWLLFGFVAANLTYAAGETHRWYLRKFENYPANRHAIFPYVY.

Helical transmembrane passes span 12–32 (GAWITVWIVSILPLVIASIPT), 66–86 (FAHFYVIGVVWTTLLLAATWM), 164–184 (MHILGYFAGLFFYVTAPLSLC), 223–243 (PLMKLGSLQWIGGAIFLWGWI), 266–286 (IIPYGDWFGMVSSPHFLAEIV), and 291–311 (LLIASGGTDITIWLLFGFVAA).

The protein belongs to the steroid 5-alpha reductase family. Polyprenal reductase subfamily. Expressed in roots, leaves, stems and flowers.

The protein localises to the endoplasmic reticulum membrane. The catalysed reaction is a di-trans,poly-cis-dolichal + NADP(+) = a di-trans,poly-cis-polyprenal + NADPH + H(+). The protein operates within protein modification; protein glycosylation. Its function is as follows. Plays a key role in early steps of protein N-linked glycosylation by being involved in the conversion of polyprenol into dolichol. Acts as a polyprenal reductase that mediates the reduction of polyprenal into dolichal in a NADP-dependent mechanism. Dolichols are required for the synthesis of dolichol-linked monosaccharides and the oligosaccharide precursor used for N-glycosylation. Involved in the regulation of plant growth and reproductive processes. This Arabidopsis thaliana (Mouse-ear cress) protein is Polyprenal reductase 2.